Here is a 662-residue protein sequence, read N- to C-terminus: Protein translocase subunit SecA 2 (662 aa).

Residues Gln110, 128–132, and Asp538 contribute to the ATP site; that span reads GEGKT.

Belongs to the SecA family. In terms of assembly, monomer and homodimer. Part of the essential Sec protein translocation apparatus which comprises SecA, SecYEG and auxiliary proteins SecDF. Other proteins may also be involved.

Its subcellular location is the cell inner membrane. It localises to the cytoplasm. It carries out the reaction ATP + H2O + cellular proteinSide 1 = ADP + phosphate + cellular proteinSide 2.. In terms of biological role, part of the Sec protein translocase complex. Interacts with the SecYEG preprotein conducting channel. Has a central role in coupling the hydrolysis of ATP to the transfer of proteins into and across the cell membrane, serving as an ATP-driven molecular motor driving the stepwise translocation of polypeptide chains across the membrane. This chain is Protein translocase subunit SecA 2, found in Chlorobium chlorochromatii (strain CaD3).